A 278-amino-acid polypeptide reads, in one-letter code: Large ribosomal subunit protein uL24m (278 aa).

Positions 109–142 constitute a KOW domain; it reads FFPGDLVQVMVGKDKGRQGLVLTISRDSSEVVVD.

It belongs to the universal ribosomal protein uL24 family.

Its subcellular location is the mitochondrion. The sequence is that of Large ribosomal subunit protein uL24m (mrpl-24) from Caenorhabditis briggsae.